We begin with the raw amino-acid sequence, 620 residues long: Probable protein arginine N-methyltransferase 3 (620 aa).

Basic and acidic residues predominate over residues 1 to 17; the sequence is MATREHELRPEQERLGE. Residues 1–45 are disordered; it reads MATREHELRPEQERLGEDREEYEDGEEEEEEEEEEEGWDDWESDG. The segment covering 18 to 45 has biased composition (acidic residues); the sequence is DREEYEDGEEEEEEEEEEEGWDDWESDG. The segment at 55 to 78 adopts a C2H2-type 1 zinc-finger fold; sequence LLCLFCSARFDSESSLFSHCASEH. The C2H2-type 2; degenerate zinc finger occupies 110-137; the sequence is NKCWSCGQVFSSNSELCGHLHALEIPQL. Residues 253–582 form the SAM-dependent MTase PRMT-type domain; it reads DESYFGSYSS…DECPAVMIRS (330 aa). Arginine 275, glycine 299, aspartate 321, serine 323, and glutamate 364 together coordinate S-adenosyl-L-homocysteine. Active-site residues include glutamate 383 and glutamate 392.

This sequence belongs to the class I-like SAM-binding methyltransferase superfamily. Protein arginine N-methyltransferase family.

Its subcellular location is the cytoplasm. It is found in the cytosol. It carries out the reaction L-arginyl-[protein] + S-adenosyl-L-methionine = N(omega)-methyl-L-arginyl-[protein] + S-adenosyl-L-homocysteine + H(+). It catalyses the reaction L-arginyl-[protein] + 2 S-adenosyl-L-methionine = N(omega),N(omega)-dimethyl-L-arginyl-[protein] + 2 S-adenosyl-L-homocysteine + 2 H(+). Functionally, protein-arginine N-methyltransferase that catalyzes both the monomethylation and asymmetric dimethylation of the guanidino nitrogens of arginine residues in target proteins, and therefore falls into the group of type I methyltransferases. The protein is Probable protein arginine N-methyltransferase 3 (PRMT3) of Oryza sativa subsp. indica (Rice).